A 154-amino-acid polypeptide reads, in one-letter code: Cathelicidin-2 (154 aa).

The N-terminal stretch at 1–17 (MLSCWVLLLALLGGVCA) is a signal peptide. Positions 18 to 122 (LPAPLSYPQA…RCRDASSDPV (105 aa)) are excised as a propeptide. 2 disulfide bridges follow: Cys75–Cys86 and Cys97–Cys114.

It belongs to the cathelicidin family. In terms of tissue distribution, detected in trachea, lung, proventriculus, duodenum, jejunum, ileum, caeca, colon, caecal tonsil, bursa of Fabricius, kidney, ovary, testis, thymus, liver, spleen, bone marrow, skin, uropygial gland, muscle and brain.

The protein resides in the secreted. Functionally, binds bacterial lipopolysaccharide (LPS). Has potent antimicrobial activity against Gram-positive and Gram-negative bacteria (in vitro). Has hemolytic activity (in vitro). May play a role in the innate immune response. The sequence is that of Cathelicidin-2 (CATHL2) from Gallus gallus (Chicken).